The sequence spans 294 residues: tRNA dimethylallyltransferase (294 aa).

An ATP-binding site is contributed by 11–18 (GPTAVGKT). 13–18 (TAVGKT) is a substrate binding site. The segment at 36 to 39 (DSQQ) is interaction with substrate tRNA.

It belongs to the IPP transferase family. Monomer. Mg(2+) is required as a cofactor.

The catalysed reaction is adenosine(37) in tRNA + dimethylallyl diphosphate = N(6)-dimethylallyladenosine(37) in tRNA + diphosphate. Catalyzes the transfer of a dimethylallyl group onto the adenine at position 37 in tRNAs that read codons beginning with uridine, leading to the formation of N6-(dimethylallyl)adenosine (i(6)A). This is tRNA dimethylallyltransferase from Lactococcus lactis subsp. cremoris (strain SK11).